A 2189-amino-acid polypeptide reads, in one-letter code: Chromatin modification-related protein eaf-1 (2189 aa).

3 disordered regions span residues V183–E400, V415–P438, and E477–L601. Low complexity predominate over residues P234–A253. The segment covering A260–R277 has biased composition (basic and acidic residues). Composition is skewed to polar residues over residues T281–D293, T300–P312, and A319–F333. Residues P336–T349 show a composition bias toward basic and acidic residues. Positions Q534 to S543 are enriched in low complexity. Residues E573–H583 are compositionally biased toward polar residues. One can recognise an HSA domain in the interval P722 to D797. Positions F985–E1045 constitute a Myb-like domain. Low complexity-rich tracts occupy residues V1320–Q1330 and Q1336–Q1406. 4 disordered regions span residues V1320–P1428, M1622–A1644, Q1663–Q1831, and V1846–K2189. Composition is skewed to low complexity over residues Q1663–G1808, G1818–Q1831, V1846–A1863, Q1873–Q2089, and S2097–K2189.

The protein belongs to the EAF1 family. Component of the NuA4 histone acetyltransferase complex.

It localises to the nucleus. In terms of biological role, component of the NuA4 histone acetyltransferase complex which is involved in transcriptional activation of selected genes principally by acetylation of nucleosomal histone H4 and H2A. The NuA4 complex is also involved in DNA repair. The sequence is that of Chromatin modification-related protein eaf-1 (eaf-1) from Neurospora crassa (strain ATCC 24698 / 74-OR23-1A / CBS 708.71 / DSM 1257 / FGSC 987).